The following is a 546-amino-acid chain: Carboxypeptidase Y homolog A (546 aa).

The signal sequence occupies residues 1–17 (MKLLASTVLMGAAAASI). A propeptide spanning residues 18–132 (APQQQVLKNP…KLEKYNMRAK (115 aa)) is cleaved from the precursor. 5 disulfides stabilise this stretch: Cys-186-Cys-426, Cys-320-Cys-334, Cys-344-Cys-367, Cys-351-Cys-360, and Cys-389-Cys-396. Asn-217 carries an N-linked (GlcNAc...) asparagine glycan. The active site involves Ser-273. Asp-465 is an active-site residue. The N-linked (GlcNAc...) asparagine glycan is linked to Asn-512. Residue His-523 is part of the active site.

It belongs to the peptidase S10 family.

It is found in the vacuole. It catalyses the reaction Release of a C-terminal amino acid with broad specificity.. In terms of biological role, vacuolar carboxypeptidase involved in degradation of small peptides. Digests preferentially peptides containing an aliphatic or hydrophobic residue in P1' position, as well as methionine, leucine or phenylalanine in P1 position of ester substrate. This is Carboxypeptidase Y homolog A (cpyA) from Sclerotinia sclerotiorum (strain ATCC 18683 / 1980 / Ss-1) (White mold).